A 2211-amino-acid chain; its full sequence is Activating signal cointegrator 1 complex subunit 3 (2211 aa).

Residues 495-678 (ETAYNTNENM…FLHVNPYIGL (184 aa)) form the Helicase ATP-binding 1 domain. Residue 508–515 (APTGAGKT) coordinates ATP. A DEVH box motif is present at residues 620-623 (DEVH). The region spanning 717–923 (VLKQIMAGHQ…GTVTNVEEAV (207 aa)) is the Helicase C-terminal 1 domain. An SEC63 1 domain is found at 987–1296 (STDLGRTASH…GAEAVCIINF (310 aa)). Residues 1345 to 1520 (HTLYHTDCNV…WLNINQMGLF (176 aa)) enclose the Helicase ATP-binding 2 domain. ATP is bound at residue 1358–1365 (APTGSGKT). The DEIH box motif lies at 1462–1465 (DEIH). A Helicase C-terminal 2 domain is found at 1553-1760 (PAFQAIRSHS…GTITSKQDAM (208 aa)). Positions 1821-2184 (PLTYGRIASY…YLGMDQQYDI (364 aa)) constitute an SEC63 2 domain.

This sequence belongs to the helicase family.

It localises to the nucleus. The protein localises to the nucleus speckle. Its subcellular location is the cytoplasm. It is found in the cytosol. The enzyme catalyses Couples ATP hydrolysis with the unwinding of duplex DNA by translocating in the 3'-5' direction.. The catalysed reaction is ATP + H2O = ADP + phosphate + H(+). Its function is as follows. 3'-5' DNA helicase involved in repair of alkylated DNA. Promotes DNA unwinding to generate single-stranded substrate needed for ALKBH3, enabling ALKBH3 to process alkylated N3-methylcytosine (3mC) within double-stranded regions. Also involved in activation of the ribosome quality control (RQC) pathway, a pathway that degrades nascent peptide chains during problematic translation. Drives the splitting of stalled ribosomes. The chain is Activating signal cointegrator 1 complex subunit 3 (ascc3) from Gallus gallus (Chicken).